The chain runs to 111 residues: Large ribosomal subunit protein P2 (111 aa).

The span at 63-84 (ASMPTGGAPAAAAGGAATAPAA) shows a compositional bias: low complexity. Residues 63–111 (ASMPTGGAPAAAAGGAATAPAAEAKEAKKEEKKEESEEEDEDMGFGLFD) form a disordered region. Over residues 85 to 97 (EAKEAKKEEKKEE) the composition is skewed to basic and acidic residues. Serine 98 bears the Phosphoserine mark.

As to quaternary structure, part of the ribosomal stalk of the large ribosomal subunit; P1 and P2 exist as dimers which assemble on the P0 scaffold.

Functionally, plays an important role in the elongation step of protein synthesis. The sequence is that of Large ribosomal subunit protein P2 from Artemia salina (Brine shrimp).